Consider the following 63-residue polypeptide: Large ribosomal subunit protein uL29 (63 aa).

Belongs to the universal ribosomal protein uL29 family.

The sequence is that of Large ribosomal subunit protein uL29 from Serratia proteamaculans (strain 568).